Reading from the N-terminus, the 289-residue chain is Acetyl-coenzyme A carboxylase carboxyl transferase subunit beta (289 aa).

Residues 28–289 form the CoA carboxyltransferase N-terminal domain; sequence VMTKCPKCKK…QGGEMAVWQS (262 aa). Positions 32, 35, 51, and 54 each coordinate Zn(2+). The C4-type zinc finger occupies 32-54; the sequence is CPKCKKIMYTKELLKNLKVCVNC.

Belongs to the AccD/PCCB family. In terms of assembly, acetyl-CoA carboxylase is a heterohexamer composed of biotin carboxyl carrier protein (AccB), biotin carboxylase (AccC) and two subunits each of ACCase subunit alpha (AccA) and ACCase subunit beta (AccD). It depends on Zn(2+) as a cofactor.

The protein localises to the cytoplasm. The catalysed reaction is N(6)-carboxybiotinyl-L-lysyl-[protein] + acetyl-CoA = N(6)-biotinyl-L-lysyl-[protein] + malonyl-CoA. It functions in the pathway lipid metabolism; malonyl-CoA biosynthesis; malonyl-CoA from acetyl-CoA: step 1/1. Functionally, component of the acetyl coenzyme A carboxylase (ACC) complex. Biotin carboxylase (BC) catalyzes the carboxylation of biotin on its carrier protein (BCCP) and then the CO(2) group is transferred by the transcarboxylase to acetyl-CoA to form malonyl-CoA. The protein is Acetyl-coenzyme A carboxylase carboxyl transferase subunit beta of Bacillus cereus (strain ATCC 10987 / NRS 248).